The primary structure comprises 304 residues: Glycosyltransferase AglE (304 aa).

The protein belongs to the glycosyltransferase 2 family.

It localises to the cell membrane. It functions in the pathway cell surface structure biogenesis; S-layer biogenesis. Functionally, involved in the assembly of a N-linked pentasaccharide that decorates the S-layer glycoprotein and flagellins. Catalyzes the addition to the dolichol phosphate carrier of the hexuronic acid found at position 4 of the pentasaccharide. The protein is Glycosyltransferase AglE (aglE) of Haloferax volcanii (strain ATCC 29605 / DSM 3757 / JCM 8879 / NBRC 14742 / NCIMB 2012 / VKM B-1768 / DS2) (Halobacterium volcanii).